Here is a 399-residue protein sequence, read N- to C-terminus: Formate-dependent phosphoribosylglycinamide formyltransferase (399 aa).

N(1)-(5-phospho-beta-D-ribosyl)glycinamide is bound by residues glutamate 22 to leucine 23 and glutamate 82. ATP-binding positions include arginine 115, lysine 157, serine 162–glutamine 167, glutamate 197–valine 200, and glutamate 205. The ATP-grasp domain occupies arginine 120–leucine 315. 2 residues coordinate Mg(2+): glutamate 274 and glutamate 286. Residues aspartate 293, lysine 362, and arginine 369 to arginine 370 contribute to the N(1)-(5-phospho-beta-D-ribosyl)glycinamide site.

The protein belongs to the PurK/PurT family. As to quaternary structure, homodimer.

It catalyses the reaction N(1)-(5-phospho-beta-D-ribosyl)glycinamide + formate + ATP = N(2)-formyl-N(1)-(5-phospho-beta-D-ribosyl)glycinamide + ADP + phosphate + H(+). Its pathway is purine metabolism; IMP biosynthesis via de novo pathway; N(2)-formyl-N(1)-(5-phospho-D-ribosyl)glycinamide from N(1)-(5-phospho-D-ribosyl)glycinamide (formate route): step 1/1. Functionally, involved in the de novo purine biosynthesis. Catalyzes the transfer of formate to 5-phospho-ribosyl-glycinamide (GAR), producing 5-phospho-ribosyl-N-formylglycinamide (FGAR). Formate is provided by PurU via hydrolysis of 10-formyl-tetrahydrofolate. This is Formate-dependent phosphoribosylglycinamide formyltransferase from Thioalkalivibrio sulfidiphilus (strain HL-EbGR7).